Consider the following 596-residue polypeptide: Clathrin heavy chain linker domain-containing protein 1 (596 aa).

Positions 129 to 241 (QLEAKMRIIE…RDIAENLKKD (113 aa)) form a coiled coil.

The sequence is that of Clathrin heavy chain linker domain-containing protein 1 (Clhc1) from Mus musculus (Mouse).